A 374-amino-acid chain; its full sequence is Chaperone protein DnaJ (374 aa).

The region spanning 5–70 (DYYEVLGVNR…RKRASYDQFG (66 aa)) is the J domain. The segment at 133–210 (GLSRTIKVPT…CHGQGRQQQT (78 aa)) adopts a CR-type zinc-finger fold. Residues Cys146, Cys149, Cys162, Cys165, Cys184, Cys187, Cys198, and Cys201 each contribute to the Zn(2+) site. CXXCXGXG motif repeat units follow at residues 146-153 (CKTCNGSG), 162-169 (CPRCNGSG), 184-191 (CSVCRGRG), and 198-205 (CTDCHGQG).

It belongs to the DnaJ family. Homodimer. It depends on Zn(2+) as a cofactor.

Its subcellular location is the cytoplasm. In terms of biological role, participates actively in the response to hyperosmotic and heat shock by preventing the aggregation of stress-denatured proteins and by disaggregating proteins, also in an autonomous, DnaK-independent fashion. Unfolded proteins bind initially to DnaJ; upon interaction with the DnaJ-bound protein, DnaK hydrolyzes its bound ATP, resulting in the formation of a stable complex. GrpE releases ADP from DnaK; ATP binding to DnaK triggers the release of the substrate protein, thus completing the reaction cycle. Several rounds of ATP-dependent interactions between DnaJ, DnaK and GrpE are required for fully efficient folding. Also involved, together with DnaK and GrpE, in the DNA replication of plasmids through activation of initiation proteins. This chain is Chaperone protein DnaJ, found in Coxiella burnetii (strain CbuG_Q212) (Coxiella burnetii (strain Q212)).